Reading from the N-terminus, the 200-residue chain is NADH-quinone oxidoreductase subunit B (200 aa).

Residues Cys-78, Cys-79, Cys-144, and Cys-174 each coordinate [4Fe-4S] cluster.

Belongs to the complex I 20 kDa subunit family. NDH-1 is composed of 14 different subunits. Subunits NuoB, C, D, E, F, and G constitute the peripheral sector of the complex. Requires [4Fe-4S] cluster as cofactor.

It is found in the cell membrane. It carries out the reaction a quinone + NADH + 5 H(+)(in) = a quinol + NAD(+) + 4 H(+)(out). In terms of biological role, NDH-1 shuttles electrons from NADH, via FMN and iron-sulfur (Fe-S) centers, to quinones in the respiratory chain. The immediate electron acceptor for the enzyme in this species is believed to be ubiquinone. Couples the redox reaction to proton translocation (for every two electrons transferred, four hydrogen ions are translocated across the cytoplasmic membrane), and thus conserves the redox energy in a proton gradient. The sequence is that of NADH-quinone oxidoreductase subunit B from Dehalococcoides mccartyi (strain ATCC BAA-2100 / JCM 16839 / KCTC 5957 / BAV1).